Reading from the N-terminus, the 178-residue chain is Large ribosomal subunit protein uL6 (178 aa).

Belongs to the universal ribosomal protein uL6 family. Part of the 50S ribosomal subunit.

Functionally, this protein binds to the 23S rRNA, and is important in its secondary structure. It is located near the subunit interface in the base of the L7/L12 stalk, and near the tRNA binding site of the peptidyltransferase center. In Opitutus terrae (strain DSM 11246 / JCM 15787 / PB90-1), this protein is Large ribosomal subunit protein uL6.